The sequence spans 495 residues: Glutamyl-tRNA(Gln) amidotransferase subunit A (495 aa).

Residues Lys-79 and Ser-159 each act as charge relay system in the active site. The active-site Acyl-ester intermediate is the Ser-183.

The protein belongs to the amidase family. GatA subfamily. Heterotrimer of A, B and C subunits.

It catalyses the reaction L-glutamyl-tRNA(Gln) + L-glutamine + ATP + H2O = L-glutaminyl-tRNA(Gln) + L-glutamate + ADP + phosphate + H(+). Allows the formation of correctly charged Gln-tRNA(Gln) through the transamidation of misacylated Glu-tRNA(Gln) in organisms which lack glutaminyl-tRNA synthetase. The reaction takes place in the presence of glutamine and ATP through an activated gamma-phospho-Glu-tRNA(Gln). This Gluconobacter oxydans (strain 621H) (Gluconobacter suboxydans) protein is Glutamyl-tRNA(Gln) amidotransferase subunit A.